A 440-amino-acid chain; its full sequence is D-serine dehydratase (440 aa).

K116 is subject to N6-(pyridoxal phosphate)lysine.

Belongs to the serine/threonine dehydratase family. DsdA subfamily. Monomer. The cofactor is pyridoxal 5'-phosphate.

The catalysed reaction is D-serine = pyruvate + NH4(+). In Salmonella typhi, this protein is D-serine dehydratase.